Reading from the N-terminus, the 345-residue chain is MDGEDIPDFSSLKEETAYWKELSLKYKQSFQEARDELVEFQEGSRELEAELEAQLVQAEQRNRDLQADNQRLKYEVEALKEKLEHQYAQSYKQVSVLEDDLSQTRAIKEQLHKYVRELEQANDDLERAKRATIVSLEDFEQRLNQAIERNAFLESELDEKESLLVSVQRLKDEARDLRQELAVRERQQEVTRKSAPSSPTLDCEKMDSAVQASLSLPATPVGKGTENTFPSPKAIPNGFGTSPLTPSARISALNIVGDLLRKVGALESKLAACRNFAKDQASRKSYISGNVNCGVLNGNGTKFSRSGHTSFFDKGAVNGFDPAPPPPGLGSSRPSSAPGMLPLSV.

The stretch at 28–190 (QSFQEARDEL…LAVRERQQEV (163 aa)) forms a coiled coil. Residues 56–166 (VQAEQRNRDL…LDEKESLLVS (111 aa)) are self-association. The segment at 64-189 (DLQADNQRLK…ELAVRERQQE (126 aa)) is interaction with KATNB1. The segment at 114-133 (YVRELEQANDDLERAKRATI) is required for interaction with PAFAH1B1. An interaction with CENPF region spans residues 175 to 345 (RDLRQELAVR…SAPGMLPLSV (171 aa)). The interval 189–256 (EVTRKSAPSS…SARISALNIV (68 aa)) is interaction with YWHAE. The segment at 191–345 (TRKSAPSSPT…SAPGMLPLSV (155 aa)) is interaction with NEFL. Positions 195–256 (APSSPTLDCE…SARISALNIV (62 aa)) are interaction with KATNA1. Serine 215 carries the phosphoserine modification. Threonine 219 is modified (phosphothreonine; by CDK1 and MAPK1). Serine 231 carries the phosphoserine modification. The interval 241–280 (TSPLTPSARISALNIVGDLLRKVGALESKLAACRNFAKDQ) is interaction with DISC1. The residue at position 242 (serine 242) is a Phosphoserine; by CDK1. Threonine 245 is subject to Phosphothreonine; by CDK1 and MAPK1. The interval 256 to 291 (VGDLLRKVGALESKLAACRNFAKDQASRKSYISGNV) is required for localization to the centrosome and interaction with dynein, dynactin, tubulin gamma, PCM1 and PCNT. Residue cysteine 273 is the site of S-palmitoyl cysteine; by ZDHHC2, ZDHHC3 and ZDHHC7 attachment. Residues 315-345 (GAVNGFDPAPPPPGLGSSRPSSAPGMLPLSV) are disordered. The segment covering 329-339 (LGSSRPSSAPG) has biased composition (low complexity). Serine 344 is subject to Phosphoserine.

It belongs to the nudE family. As to quaternary structure, interacts with PLEKHM1 (via N- and C-terminus). Interacts with YWHAE. Interacts directly with NEFL and indirectly with NEFH. Interacts with microtubules. Self-associates. Interacts with DISC1, dynein, dynactin, tubulin gamma, KATNA1, KATNB1, PAFAH1B1, PCM1 and PCNT. Interacts (via C-terminus) with CENPF. Interacts with ZNF365. Interacts with GTP-bound RAB9A; the interaction may lead to RAB9A-dynein motor tethering. Phosphorylated in mitosis. Can be phosphorylated by CDK1, CDK5 and MAPK1. Phosphorylation by CDK5 promotes interaction with KATNA1 and YWHAE. In terms of processing, palmitoylation at Cys-273 reduces affinity for dynein. As to expression, expressed in brain, heart, kidney, liver, lung, pancreas, placenta and skeletal muscle.

Its subcellular location is the cytoplasm. The protein localises to the cytoskeleton. The protein resides in the microtubule organizing center. It is found in the centrosome. It localises to the chromosome. Its subcellular location is the centromere. The protein localises to the kinetochore. The protein resides in the spindle. In terms of biological role, required for organization of the cellular microtubule array and microtubule anchoring at the centrosome. May regulate microtubule organization at least in part by targeting the microtubule severing protein KATNA1 to the centrosome. Also positively regulates the activity of the minus-end directed microtubule motor protein dynein. May enhance dynein-mediated microtubule sliding by targeting dynein to the microtubule plus ends. Required for several dynein- and microtubule-dependent processes such as the maintenance of Golgi integrity, the centripetal motion of secretory vesicles and the coupling of the nucleus and centrosome. Also required during brain development for the migration of newly formed neurons from the ventricular/subventricular zone toward the cortical plate. Plays a role, together with DISC1, in the regulation of neurite outgrowth. Required for mitosis in some cell types but appears to be dispensible for mitosis in cortical neuronal progenitors, which instead requires NDE1. Facilitates the polymerization of neurofilaments from the individual subunits NEFH and NEFL. Positively regulates lysosome peripheral distribution and ruffled border formation in osteoclasts. Plays a role, together with DISC1, in the regulation of neurite outgrowth. May act as a RAB9A/B effector that tethers RAB9-associated late endosomes to the dynein motor for their retrograde transport to the trans-Golgi network. In Homo sapiens (Human), this protein is Nuclear distribution protein nudE-like 1 (NDEL1).